The chain runs to 90 residues: uncharacterized protein (90 aa).

It localises to the cytoplasm. This is an uncharacterized protein from Saccharomyces cerevisiae (strain ATCC 204508 / S288c) (Baker's yeast).